We begin with the raw amino-acid sequence, 453 residues long: MGSVLGLCSMASWIPCLCGSAPCLLCRCCPSGNNSTVTRLIYALFLLVGVCVACVMLIPGMEEQLNKIPGFCENEKGVVPCNILVGYKAVYRLCFGLAMFYLLLSLLMIKVKSSSDPRAAVHNGFWFFKFAAAIAIIIGAFFIPEGTFTTVWFYVGMAGAFCFILIQLVLLIDFAHSWNESWVEKMEEGNSRCWYAALLSATALNYLLSLVAIVLFFVYYTHPASCSENKAFISVNMLLCIGASVMSILPKIQESQPRSGLLQSSVITVYTMYLTWSAMTNEPETNCNPSLLSIIGYNTTSTVPKEGQSVQWWHAQGIIGLILFLLCVFYSSIRTSNNSQVNKLTLTSDESTLIEDGGARSDGSLEDGDDVHRAVDNERDGVTYSYSFFHFMLFLASLYIMMTLTNWYRYEPSREMKSQWTAVWVKISSSWIGIVLYVWTLVAPLVLTNRDFD.

A lipid anchor (N-myristoyl glycine) is attached at glycine 2. At 2–39 (GSVLGLCSMASWIPCLCGSAPCLLCRCCPSGNNSTVTR) the chain is on the cytoplasmic side. Residues 40–60 (LIYALFLLVGVCVACVMLIPG) form a helical membrane-spanning segment. Topologically, residues 61-88 (MEEQLNKIPGFCENEKGVVPCNILVGYK) are lumenal. A helical transmembrane segment spans residues 89–109 (AVYRLCFGLAMFYLLLSLLMI). The Cytoplasmic portion of the chain corresponds to 110–123 (KVKSSSDPRAAVHN). The chain crosses the membrane as a helical span at residues 124–144 (GFWFFKFAAAIAIIIGAFFIP). The Lumenal segment spans residues 145-151 (EGTFTTV). The helical transmembrane segment at 152–172 (WFYVGMAGAFCFILIQLVLLI) threads the bilayer. The Cytoplasmic portion of the chain corresponds to 173–197 (DFAHSWNESWVEKMEEGNSRCWYAA). Residues 198 to 218 (LLSATALNYLLSLVAIVLFFV) traverse the membrane as a helical segment. Residues 219 to 231 (YYTHPASCSENKA) lie on the Lumenal side of the membrane. The chain crosses the membrane as a helical span at residues 232–252 (FISVNMLLCIGASVMSILPKI). The Cytoplasmic segment spans residues 253–259 (QESQPRS). A helical transmembrane segment spans residues 260-280 (GLLQSSVITVYTMYLTWSAMT). Over 281-309 (NEPETNCNPSLLSIIGYNTTSTVPKEGQS) the chain is Lumenal. A helical membrane pass occupies residues 310-330 (VQWWHAQGIIGLILFLLCVFY). Topologically, residues 331–387 (SSIRTSNNSQVNKLTLTSDESTLIEDGGARSDGSLEDGDDVHRAVDNERDGVTYSYS) are cytoplasmic. Serine 351 is subject to Phosphoserine. The residue at position 352 (threonine 352) is a Phosphothreonine. Residues serine 361 and serine 364 each carry the phosphoserine modification. Residues 388–408 (FFHFMLFLASLYIMMTLTNWY) traverse the membrane as a helical segment. Topologically, residues 409-426 (RYEPSREMKSQWTAVWVK) are lumenal. The chain crosses the membrane as a helical span at residues 427–447 (ISSSWIGIVLYVWTLVAPLVL). Residues 448–453 (TNRDFD) lie on the Cytoplasmic side of the membrane.

Belongs to the TDE1 family. Interacts with SPTLC1.

The protein resides in the endoplasmic reticulum membrane. Enhances the incorporation of serine into phosphatidylserine and sphingolipids. This Pongo abelii (Sumatran orangutan) protein is Serine incorporator 1 (SERINC1).